A 395-amino-acid chain; its full sequence is MLRRLLERPCTLALLVGSQLAVMMYLSLGGFRSLSALFGRDPGPTFDYSHPHDVYSNLSHLPAAPGAAGAPPAQALPYCPERSPFLVGPVSVSFSPVPSLAEIVERNPRVESGGRYRPAGCEPRSRTAIIVPHRAREHHLRLLLYHLHPFLQRQQLAYGIYVIHQAGNGTFNRAKLLNVGVREALRDEEWDCLFLHDVDLLPENDHNLYVCDPRGPRHVAVAMNKFGYSLPYPQYFGGVSALTPDQYLKMNGFPNEYWGWGGEDDDIATRVRLAGMKISRPPTSVGHYKMVKHRGDKGNEENPHRFDLLVRTQNSWTQDGMNSLTYRLLARELGPLYTNITADIGTDPRGPRSPSGPRYPPGSSQAFRQEMLQRRPPARPGPLPTANHTAPRGSH.

Over 1–10 (MLRRLLERPC) the chain is Cytoplasmic. A helical; Signal-anchor for type II membrane protein transmembrane segment spans residues 11 to 31 (TLALLVGSQLAVMMYLSLGGF). The Lumenal segment spans residues 32 to 395 (RSLSALFGRD…ANHTAPRGSH (364 aa)). Asparagine 57 carries N-linked (GlcNAc...) asparagine glycosylation. Residues cysteine 79 and cysteine 121 are joined by a disulfide bond. 132-136 (PHRAR) contributes to the UDP-alpha-D-galactose binding site. A glycan (N-linked (GlcNAc...) asparagine) is linked at asparagine 168. UDP-alpha-D-galactose is bound by residues 171–173 (FNR), 198–199 (VD), tyrosine 228, and tryptophan 260. Cysteine 192 and cysteine 211 form a disulfide bridge. Aspartate 199 lines the Mn(2+) pocket. 262–265 (GEDD) is a binding site for N-acetyl-D-glucosamine. Histidine 293 serves as a coordination point for Mn(2+). 293–295 (HRG) is a binding site for UDP-alpha-D-galactose. Arginine 305 contacts N-acetyl-D-glucosamine. N-linked (GlcNAc...) asparagine glycosylation occurs at asparagine 339. Residues 340–395 (ITADIGTDPRGPRSPSGPRYPPGSSQAFRQEMLQRRPPARPGPLPTANHTAPRGSH) are disordered. A compositionally biased stretch (low complexity) spans 352 to 364 (RSPSGPRYPPGSS). N-linked (GlcNAc...) asparagine glycosylation is present at asparagine 387.

Belongs to the glycosyltransferase 7 family. Mn(2+) serves as cofactor.

The protein resides in the golgi apparatus. It is found in the golgi stack membrane. It catalyses the reaction an N-acetyl-beta-D-glucosaminyl derivative + UDP-alpha-D-galactose = a beta-D-galactosyl-(1-&gt;4)-N-acetyl-beta-D-glucosaminyl derivative + UDP + H(+). The catalysed reaction is N-acetyl-D-glucosamine + UDP-alpha-D-galactose = beta-D-galactosyl-(1-&gt;4)-N-acetyl-D-glucosamine + UDP + H(+). It carries out the reaction a beta-D-GlcNAc-(1-&gt;3)-beta-D-Gal-(1-&gt;4)-beta-D-Glc-(1&lt;-&gt;1)-Cer(d18:1(4E)) + UDP-alpha-D-galactose = a neolactoside nLc4Cer(d18:1(4E)) + UDP + H(+). The enzyme catalyses a beta-D-glucosylceramide + UDP-alpha-D-galactose = a beta-D-galactosyl-(1-&gt;4)-beta-D-glucosyl-(1&lt;-&gt;1)-ceramide + UDP + H(+). It catalyses the reaction a neolactoside IV(3)-beta-GlcNAc-nLc4Cer + UDP-alpha-D-galactose = a neolactoside nLc6Cer + UDP + H(+). Its pathway is protein modification; protein glycosylation. In terms of biological role, responsible for the synthesis of complex-type N-linked oligosaccharides in many glycoproteins as well as the carbohydrate moieties of glycolipids. This Mus musculus (Mouse) protein is Beta-1,4-galactosyltransferase 3.